Consider the following 144-residue polypeptide: D-aminoacyl-tRNA deacylase (144 aa).

Positions 136–137 (GP) match the Gly-cisPro motif, important for rejection of L-amino acids motif.

Belongs to the DTD family. Homodimer.

The protein localises to the cytoplasm. The enzyme catalyses glycyl-tRNA(Ala) + H2O = tRNA(Ala) + glycine + H(+). It carries out the reaction a D-aminoacyl-tRNA + H2O = a tRNA + a D-alpha-amino acid + H(+). In terms of biological role, an aminoacyl-tRNA editing enzyme that deacylates mischarged D-aminoacyl-tRNAs. Also deacylates mischarged glycyl-tRNA(Ala), protecting cells against glycine mischarging by AlaRS. Acts via tRNA-based rather than protein-based catalysis; rejects L-amino acids rather than detecting D-amino acids in the active site. By recycling D-aminoacyl-tRNA to D-amino acids and free tRNA molecules, this enzyme counteracts the toxicity associated with the formation of D-aminoacyl-tRNA entities in vivo and helps enforce protein L-homochirality. The protein is D-aminoacyl-tRNA deacylase of Corynebacterium glutamicum (strain R).